The primary structure comprises 355 residues: Spore germination protein XB (355 aa).

Transmembrane regions (helical) follow at residues 2–24 (VNFF…VIII), 34–56 (DSWI…VFIV), 69–91 (LMRN…YLII), 106–128 (FYLP…FYNI), 135–157 (IALT…MIAN), 180–197 (GMIY…ILFL), 210–232 (LIIV…IVEF), 265–287 (VYQW…PDVL), 299–321 (ISIL…SFYW), and 326–348 (VFLP…FVWV).

It belongs to the amino acid-polyamine-organocation (APC) superfamily. Spore germination protein (SGP) (TC 2.A.3.9) family.

The protein resides in the cell membrane. In terms of biological role, may allow B.anthracis to germinate within phagocytic cells and therefore involved in virulence. This chain is Spore germination protein XB (gerXB), found in Bacillus anthracis.